The primary structure comprises 505 residues: Glutamate--tRNA ligase (505 aa).

A 'HIGH' region motif is present at residues 11 to 21 (PSPTGPLHIGG). Positions 260–264 (KLSKR) match the 'KMSKS' region motif. K263 provides a ligand contact to ATP.

The protein belongs to the class-I aminoacyl-tRNA synthetase family. Glutamate--tRNA ligase type 1 subfamily. In terms of assembly, monomer.

It is found in the cytoplasm. It catalyses the reaction tRNA(Glu) + L-glutamate + ATP = L-glutamyl-tRNA(Glu) + AMP + diphosphate. Catalyzes the attachment of glutamate to tRNA(Glu) in a two-step reaction: glutamate is first activated by ATP to form Glu-AMP and then transferred to the acceptor end of tRNA(Glu). This is Glutamate--tRNA ligase from Christiangramia forsetii (strain DSM 17595 / CGMCC 1.15422 / KT0803) (Gramella forsetii).